The sequence spans 1070 residues: Phosphatidylinositol 4,5-bisphosphate 3-kinase catalytic subunit beta isoform (1070 aa).

Positions 26-115 (SDGSISVDFL…LPVLKLVTRS (90 aa)) constitute a PI3K-ABD domain. The 92-residue stretch at 194–285 (GGKLVVAVHF…RTLPHFILVE (92 aa)) folds into the PI3K-RBD domain. S324 carries the post-translational modification Phosphoserine. The 170-residue stretch at 327–496 (WGNNNPFQIV…NATALHIKFP (170 aa)) folds into the C2 PI3K-type domain. The Nuclear localization signal (NLS) signature appears at 410–418 (KVKTKKSTK). Residues 524–701 (ANVSSRGGKK…GVILEAYCRG (178 aa)) enclose the PIK helical domain. In terms of domain architecture, PI3K/PI4K catalytic spans 772 to 1053 (YVEKCRYMDS…KFDEALRESW (282 aa)). The tract at residues 778–784 (YMDSKMK) is G-loop. The tract at residues 916–924 (GIGDRHSDN) is catalytic loop. The tract at residues 935–961 (HIDFGHILGNFKSKFGIKRERVPFILT) is activation loop. A Phosphoserine; by autocatalysis modification is found at S1070.

The protein belongs to the PI3/PI4-kinase family. Heterodimer of a catalytic subunit PIK3CB and a p85 regulatory subunit (PIK3R1, PIK3R2 or PIK3R3). Interaction with PIK3R2 is required for nuclear localization and nuclear export. Part of a complex with PIK3R1 and PTEN. Binding to PTEN may antagonize the lipid kinase activity under normal growth conditions. Part of a complex involved in autophagosome formation composed of PIK3C3 and PIK3R4. Interacts with BECN1, ATG14 and RAB5A. In terms of processing, autophosphorylation at Ser-1070 negatively regulates the phosphatidylinositol-4,5-bisphosphate 3-kinase activity.

The protein localises to the cytoplasm. Its subcellular location is the nucleus. The catalysed reaction is a 1,2-diacyl-sn-glycero-3-phospho-(1D-myo-inositol-4,5-bisphosphate) + ATP = a 1,2-diacyl-sn-glycero-3-phospho-(1D-myo-inositol-3,4,5-trisphosphate) + ADP + H(+). The enzyme catalyses 1-octadecanoyl-2-(5Z,8Z,11Z,14Z)-eicosatetraenoyl-sn-glycero-3-phospho-1D-myo-inositol 4,5-bisphosphate + ATP = 1-octadecanoyl-2-(5Z,8Z,11Z,14Z-eicosatetraenoyl)-sn-glycero-3-phospho-(1D-myo-inositol 3,4,5-triphosphate) + ADP + H(+). It carries out the reaction L-seryl-[protein] + ATP = O-phospho-L-seryl-[protein] + ADP + H(+). It functions in the pathway phospholipid metabolism; phosphatidylinositol phosphate biosynthesis. Phosphoinositide-3-kinase (PI3K) phosphorylates phosphatidylinositol (PI) derivatives at position 3 of the inositol ring to produce 3-phosphoinositides. Uses ATP and PtdIns(4,5)P2 (phosphatidylinositol 4,5-bisphosphate) to generate phosphatidylinositol 3,4,5-trisphosphate (PIP3). PIP3 plays a key role by recruiting PH domain-containing proteins to the membrane, including AKT1 and PDPK1, activating signaling cascades involved in cell growth, survival, proliferation, motility and morphology. Involved in the activation of AKT1 upon stimulation by G-protein coupled receptors (GPCRs) ligands such as CXCL12, sphingosine 1-phosphate, and lysophosphatidic acid. May also act downstream receptor tyrosine kinases. Required in different signaling pathways for stable platelet adhesion and aggregation. Plays a role in platelet activation signaling triggered by GPCRs, alpha-IIb/beta-3 integrins (ITGA2B/ ITGB3) and ITAM (immunoreceptor tyrosine-based activation motif)-bearing receptors such as GP6. Regulates the strength of adhesion of ITGA2B/ ITGB3 activated receptors necessary for the cellular transmission of contractile forces. Required for platelet aggregation induced by F2 (thrombin) and thromboxane A2 (TXA2). Has a role in cell survival. May have a role in cell migration. Involved in the early stage of autophagosome formation. Modulates the intracellular level of PtdIns3P (phosphatidylinositol 3-phosphate) and activates PIK3C3 kinase activity. May act as a scaffold, independently of its lipid kinase activity to positively regulate autophagy. May have a role in insulin signaling as scaffolding protein in which the lipid kinase activity is not required. May have a kinase-independent function in regulating cell proliferation and in clathrin-mediated endocytosis. Mediator of oncogenic signal in cell lines lacking PTEN. The lipid kinase activity is necessary for its role in oncogenic transformation. Required for the growth of ERBB2 and RAS driven tumors. Also has a protein kinase activity showing autophosphorylation. The polypeptide is Phosphatidylinositol 4,5-bisphosphate 3-kinase catalytic subunit beta isoform (Pik3cb) (Rattus norvegicus (Rat)).